The chain runs to 127 residues: Small ribosomal subunit protein uS11 (127 aa).

Belongs to the universal ribosomal protein uS11 family. Part of the 30S ribosomal subunit. Interacts with proteins S7 and S18. Binds to IF-3.

Located on the platform of the 30S subunit, it bridges several disparate RNA helices of the 16S rRNA. Forms part of the Shine-Dalgarno cleft in the 70S ribosome. In Chlorobium phaeobacteroides (strain DSM 266 / SMG 266 / 2430), this protein is Small ribosomal subunit protein uS11.